The following is a 742-amino-acid chain: Phosphoribosylformylglycinamidine synthase subunit PurL (742 aa).

Residue histidine 54 is part of the active site. Residues tyrosine 57 and lysine 96 each coordinate ATP. Glutamate 98 contributes to the Mg(2+) binding site. Substrate-binding positions include serine 99–histidine 102 and arginine 121. Catalysis depends on histidine 100, which acts as the Proton acceptor. A Mg(2+)-binding site is contributed by aspartate 122. Glutamine 245 is a substrate binding site. Position 273 (aspartate 273) interacts with Mg(2+). Position 317–319 (glutamate 317–glutamine 319) interacts with substrate. ATP is bound by residues aspartate 500 and glycine 537. Position 538 (asparagine 538) interacts with Mg(2+). Serine 540 lines the substrate pocket.

It belongs to the FGAMS family. Monomer. Part of the FGAM synthase complex composed of 1 PurL, 1 PurQ and 2 PurS subunits.

Its subcellular location is the cytoplasm. It carries out the reaction N(2)-formyl-N(1)-(5-phospho-beta-D-ribosyl)glycinamide + L-glutamine + ATP + H2O = 2-formamido-N(1)-(5-O-phospho-beta-D-ribosyl)acetamidine + L-glutamate + ADP + phosphate + H(+). It participates in purine metabolism; IMP biosynthesis via de novo pathway; 5-amino-1-(5-phospho-D-ribosyl)imidazole from N(2)-formyl-N(1)-(5-phospho-D-ribosyl)glycinamide: step 1/2. Its function is as follows. Part of the phosphoribosylformylglycinamidine synthase complex involved in the purines biosynthetic pathway. Catalyzes the ATP-dependent conversion of formylglycinamide ribonucleotide (FGAR) and glutamine to yield formylglycinamidine ribonucleotide (FGAM) and glutamate. The FGAM synthase complex is composed of three subunits. PurQ produces an ammonia molecule by converting glutamine to glutamate. PurL transfers the ammonia molecule to FGAR to form FGAM in an ATP-dependent manner. PurS interacts with PurQ and PurL and is thought to assist in the transfer of the ammonia molecule from PurQ to PurL. The protein is Phosphoribosylformylglycinamidine synthase subunit PurL of Oceanobacillus iheyensis (strain DSM 14371 / CIP 107618 / JCM 11309 / KCTC 3954 / HTE831).